Here is a 340-residue protein sequence, read N- to C-terminus: Uroporphyrinogen decarboxylase (340 aa).

Residues 23–27, Asp72, Tyr147, Thr202, and His316 contribute to the substrate site; that span reads RQAGR.

It belongs to the uroporphyrinogen decarboxylase family. As to quaternary structure, homodimer.

The protein localises to the cytoplasm. The catalysed reaction is uroporphyrinogen III + 4 H(+) = coproporphyrinogen III + 4 CO2. It participates in porphyrin-containing compound metabolism; protoporphyrin-IX biosynthesis; coproporphyrinogen-III from 5-aminolevulinate: step 4/4. In terms of biological role, catalyzes the decarboxylation of four acetate groups of uroporphyrinogen-III to yield coproporphyrinogen-III. The chain is Uroporphyrinogen decarboxylase from Geobacter metallireducens (strain ATCC 53774 / DSM 7210 / GS-15).